A 288-amino-acid polypeptide reads, in one-letter code: Quinate/shikimate dehydrogenase (288 aa).

Residues Lys71 and Asp107 each contribute to the substrate site. Residues 132–135 (AGGA), 155–158 (NRRD), Lys205, 232–235 (CVYN), and Gly255 contribute to the NAD(+) site.

This sequence belongs to the shikimate dehydrogenase family. Homodimer.

The catalysed reaction is L-quinate + NAD(+) = 3-dehydroquinate + NADH + H(+). It catalyses the reaction L-quinate + NADP(+) = 3-dehydroquinate + NADPH + H(+). The enzyme catalyses shikimate + NADP(+) = 3-dehydroshikimate + NADPH + H(+). It carries out the reaction shikimate + NAD(+) = 3-dehydroshikimate + NADH + H(+). It functions in the pathway metabolic intermediate biosynthesis; chorismate biosynthesis; chorismate from D-erythrose 4-phosphate and phosphoenolpyruvate: step 4/7. The actual biological function of YdiB remains unclear, nor is it known whether 3-dehydroshikimate or quinate represents the natural substrate. Catalyzes the reversible NAD-dependent reduction of both 3-dehydroshikimate (DHSA) and 3-dehydroquinate to yield shikimate (SA) and quinate, respectively. It can use both NAD or NADP for catalysis, however it has higher catalytic efficiency with NAD. In Escherichia coli O7:K1 (strain IAI39 / ExPEC), this protein is Quinate/shikimate dehydrogenase.